A 186-amino-acid chain; its full sequence is Threonylcarbamoyl-AMP synthase (186 aa).

Residues 2 to 186 (VSNLQQVVKA…ARTEQLLRQG (185 aa)) enclose the YrdC-like domain.

It belongs to the SUA5 family. TsaC subfamily.

It is found in the cytoplasm. The catalysed reaction is L-threonine + hydrogencarbonate + ATP = L-threonylcarbamoyladenylate + diphosphate + H2O. Its function is as follows. Required for the formation of a threonylcarbamoyl group on adenosine at position 37 (t(6)A37) in tRNAs that read codons beginning with adenine. Catalyzes the conversion of L-threonine, HCO(3)(-)/CO(2) and ATP to give threonylcarbamoyl-AMP (TC-AMP) as the acyladenylate intermediate, with the release of diphosphate. In Vibrio vulnificus (strain CMCP6), this protein is Threonylcarbamoyl-AMP synthase.